A 398-amino-acid polypeptide reads, in one-letter code: Probable aminomethyltransferase (398 aa).

It belongs to the GcvT family. In terms of assembly, the glycine cleavage system is composed of four proteins: P, T, L and H.

It carries out the reaction N(6)-[(R)-S(8)-aminomethyldihydrolipoyl]-L-lysyl-[protein] + (6S)-5,6,7,8-tetrahydrofolate = N(6)-[(R)-dihydrolipoyl]-L-lysyl-[protein] + (6R)-5,10-methylene-5,6,7,8-tetrahydrofolate + NH4(+). Functionally, the glycine cleavage system catalyzes the degradation of glycine. The sequence is that of Probable aminomethyltransferase from Pyrococcus furiosus (strain ATCC 43587 / DSM 3638 / JCM 8422 / Vc1).